The following is a 392-amino-acid chain: Putative nicotinate phosphoribosyltransferase (392 aa).

Positions 21, 138, and 179 each coordinate nicotinate. H182 carries the phosphohistidine modification. A nicotinate-binding site is contributed by R235. The 5-phospho-alpha-D-ribose 1-diphosphate site is built by S240, G272, and T293. 4 residues coordinate Zn(2+): C330, C333, C348, and C350.

This sequence belongs to the NAPRTase family. Highly divergent. In terms of assembly, homodimer. Forms a trimer of dimers in the crystal. Post-translationally, transiently phosphorylated on a His residue during the reaction cycle. Phosphorylation strongly increases the affinity for substrates and increases the rate of nicotinate D-ribonucleotide production. Dephosphorylation regenerates the low-affinity form of the enzyme, leading to product release.

The catalysed reaction is nicotinate + 5-phospho-alpha-D-ribose 1-diphosphate + ATP + H2O = nicotinate beta-D-ribonucleotide + ADP + phosphate + diphosphate. The protein operates within cofactor biosynthesis; NAD(+) biosynthesis; nicotinate D-ribonucleotide from nicotinate: step 1/1. Functionally, catalyzes the synthesis of beta-nicotinate D-ribonucleotide from nicotinate and 5-phospho-D-ribose 1-phosphate at the expense of ATP. This Thermoplasma acidophilum (strain ATCC 25905 / DSM 1728 / JCM 9062 / NBRC 15155 / AMRC-C165) protein is Putative nicotinate phosphoribosyltransferase.